A 502-amino-acid polypeptide reads, in one-letter code: MDLLLFIFFLILFYYSVKYYKADNQNSLSLSGPTPVPILGNIHQVGKDAHLTIPIISKKYHGIFRMWLGGTYYVVVSDYKLIREMYIENFENFKNRIATFKTMTGDDSRGIIGCNGDIWDSNKELIMKSYKKVLNKDMNDFILLKSKELFNFFEKNGIKNEEEEDDDDDGNKSIIINNTRFYFQSLTLTVMFKMIFNENKSFQLYSDSTEFKLIFKTILNLLNSLNVYNVIYDFLGIFQPILLKFTKILDKNSFLSKIATEKFNSRIKEIDFTSDDFKANDLLDSLIMTINEDENGLNEKQIENIKSICIDFLMAGTDTTGSTIEWIILKLVNNPEFQELIFQELKKLNKSEITANDKINTPFLNSFIKETNRLYPIAPLSLPRKSINEMIIGDNKYYIPANTNILMDVKGFSLDENNYKDPNEFKPDRFLNSKVSDTLNFGIGPRNCIGQTIAMNQIHIFLSNLILNYRMFSIDCLPLPENLILSVSVRPTEYSLKLIKRV.

The helical transmembrane segment at 3–20 threads the bilayer; the sequence is LLLFIFFLILFYYSVKYY. A heme-binding site is contributed by Cys-448.

Belongs to the cytochrome P450 family. Heme serves as cofactor.

The protein localises to the membrane. The protein is Probable cytochrome P450 554A1 (cyp554A1) of Dictyostelium discoideum (Social amoeba).